The sequence spans 505 residues: Deoxyguanosinetriphosphate triphosphohydrolase (505 aa).

The HD domain occupies 66 to 273 (RLTHSMEVQQ…MEAADDISYC (208 aa)).

Belongs to the dGTPase family. Type 1 subfamily. As to quaternary structure, homotetramer. The cofactor is Mg(2+).

The enzyme catalyses dGTP + H2O = 2'-deoxyguanosine + triphosphate + H(+). Functionally, dGTPase preferentially hydrolyzes dGTP over the other canonical NTPs. The sequence is that of Deoxyguanosinetriphosphate triphosphohydrolase from Escherichia coli O7:K1 (strain IAI39 / ExPEC).